Consider the following 538-residue polypeptide: Beta-1,4-mannosyl-glycoprotein 4-beta-N-acetylglucosaminyltransferase (538 aa).

Residues Met1 to Lys7 are Cytoplasmic-facing. The helical; Signal-anchor for type II membrane protein transmembrane segment at Leu8 to Leu23 threads the bilayer. Residues His24 to Gly538 are Lumenal-facing. The segment at Pro120 to Glu161 is disordered. 3 N-linked (GlcNAc...) asparagine glycosylation sites follow: Asn245, Asn263, and Asn401. Positions Arg507 to Gly538 are disordered.

It belongs to the glycosyltransferase 17 family. In terms of assembly, interacts with MGAT4D. As to expression, highly expressed in brain and kidney and to a much lesser extent in stomach, heart, intestine, uterus, testis, ovary and lung. Not present in spleen, liver and muscle. In brain, expressed in neurons of hippocampus.

The protein resides in the golgi apparatus membrane. The enzyme catalyses N(4)-{beta-D-GlcNAc-(1-&gt;2)-alpha-D-Man-(1-&gt;3)-[beta-D-GlcNAc-(1-&gt;2)-alpha-D-Man-(1-&gt;6)]-beta-D-Man-(1-&gt;4)-beta-D-GlcNAc-(1-&gt;4)-beta-D-GlcNAc}-L-asparaginyl-[protein] + UDP-N-acetyl-alpha-D-glucosamine = N(4)-{beta-D-GlcNAc-(1-&gt;2)-alpha-D-Man-(1-&gt;3)-[beta-D-GlcNAc-(1-&gt;4)]-[beta-D-GlcNAc-(1-&gt;2)-alpha-D-Man-(1-&gt;6)]-beta-D-Man-(1-&gt;4)-beta-D-GlcNAc-(1-&gt;4)-beta-D-GlcNAc}-L-asparaginyl-[protein] + UDP + H(+). It functions in the pathway protein modification; protein glycosylation. It is involved in the regulation of the biosynthesis and biological function of glycoprotein oligosaccharides. Catalyzes the addition of N-acetylglucosamine in beta 1-4 linkage to the beta-linked mannose of the trimannosyl core of N-linked sugar chains, called bisecting N-acetylglucosamine (GlcNAc). It is one of the most important enzymes involved in the regulation of the biosynthesis of glycoprotein oligosaccharides. The addition of this bisecting GlcNAc residue alters not only the composition, but also the conformation of the N-glycan. The introduction of the bisecting GlcNAc residue results in the suppression of further processing and elongation of N-glycans, precluding the formation of beta-1,6 GlcNAc branching, catalyzed by MGAT5 since it is unable to use the bisected oligosaccharide as a substrate. Addition of bisecting N-acetylglucosamine to CDH1/E-cadherin modulates CDH1 cell membrane location. Inhibits NeuAc-alpha-2,3-Gal-beta-1,4-GlcNAc- formation which modulates sialylation levels and plays a role in cell migration regulation. In brain, addition of bisecting N-acetylglucosamine to BACE1 blocks its lysosomal targeting in response to oxidative stress and further degradation which increases its location to early endosome and the APP cleavage. This Mus musculus (Mouse) protein is Beta-1,4-mannosyl-glycoprotein 4-beta-N-acetylglucosaminyltransferase.